We begin with the raw amino-acid sequence, 127 residues long: Fluoride-specific ion channel FluC 2 (127 aa).

A run of 4 helical transmembrane segments spans residues 4–24 (IIAI…LSLL), 31–51 (FWIT…ITNL), 62–82 (IVIG…TFTF), and 94–114 (VLAL…GLAG). Gly72 and Thr75 together coordinate Na(+).

Belongs to the fluoride channel Fluc/FEX (TC 1.A.43) family.

The protein localises to the cell membrane. It carries out the reaction fluoride(in) = fluoride(out). Na(+) is not transported, but it plays an essential structural role and its presence is essential for fluoride channel function. Fluoride-specific ion channel. Important for reducing fluoride concentration in the cell, thus reducing its toxicity. This Lactiplantibacillus plantarum (strain ATCC BAA-793 / NCIMB 8826 / WCFS1) (Lactobacillus plantarum) protein is Fluoride-specific ion channel FluC 2.